An 879-amino-acid polypeptide reads, in one-letter code: Phosphoenolpyruvate carboxylase (879 aa).

Catalysis depends on residues His-141 and Lys-546.

It belongs to the PEPCase type 1 family. Requires Mg(2+) as cofactor.

It carries out the reaction oxaloacetate + phosphate = phosphoenolpyruvate + hydrogencarbonate. Forms oxaloacetate, a four-carbon dicarboxylic acid source for the tricarboxylic acid cycle. The protein is Phosphoenolpyruvate carboxylase of Stutzerimonas stutzeri (strain A1501) (Pseudomonas stutzeri).